A 185-amino-acid chain; its full sequence is ATP-dependent protease subunit HslV (185 aa).

T6 is an active-site residue. The Na(+) site is built by G162, C165, and T168.

It belongs to the peptidase T1B family. HslV subfamily. A double ring-shaped homohexamer of HslV is capped on each side by a ring-shaped HslU homohexamer. The assembly of the HslU/HslV complex is dependent on binding of ATP.

It is found in the cytoplasm. It catalyses the reaction ATP-dependent cleavage of peptide bonds with broad specificity.. With respect to regulation, allosterically activated by HslU binding. Functionally, protease subunit of a proteasome-like degradation complex believed to be a general protein degrading machinery. In Nitratidesulfovibrio vulgaris (strain DSM 19637 / Miyazaki F) (Desulfovibrio vulgaris), this protein is ATP-dependent protease subunit HslV.